The following is an 807-amino-acid chain: Glycerol-3-phosphate acyltransferase (807 aa).

Positions cysteine 305–methionine 310 match the HXXXXD motif motif.

It belongs to the GPAT/DAPAT family.

Its subcellular location is the cell inner membrane. It carries out the reaction sn-glycerol 3-phosphate + an acyl-CoA = a 1-acyl-sn-glycero-3-phosphate + CoA. Its pathway is phospholipid metabolism; CDP-diacylglycerol biosynthesis; CDP-diacylglycerol from sn-glycerol 3-phosphate: step 1/3. The protein is Glycerol-3-phosphate acyltransferase of Klebsiella pneumoniae subsp. pneumoniae (strain ATCC 700721 / MGH 78578).